Consider the following 125-residue polypeptide: Small ribosomal subunit protein uS13 (125 aa).

The interval 95 to 125 (GLPVNGQRTRTNARTRKGVKKTVANKKKATK) is disordered. Residues 105–125 (TNARTRKGVKKTVANKKKATK) show a composition bias toward basic residues.

It belongs to the universal ribosomal protein uS13 family. As to quaternary structure, part of the 30S ribosomal subunit. Forms a loose heterodimer with protein S19. Forms two bridges to the 50S subunit in the 70S ribosome.

In terms of biological role, located at the top of the head of the 30S subunit, it contacts several helices of the 16S rRNA. In the 70S ribosome it contacts the 23S rRNA (bridge B1a) and protein L5 of the 50S subunit (bridge B1b), connecting the 2 subunits; these bridges are implicated in subunit movement. Contacts the tRNAs in the A and P-sites. This chain is Small ribosomal subunit protein uS13, found in Leptospira biflexa serovar Patoc (strain Patoc 1 / Ames).